The primary structure comprises 307 residues: tRNA dimethylallyltransferase 1 (307 aa).

10 to 17 (GPTASGKT) provides a ligand contact to ATP. Residue 12-17 (TASGKT) participates in substrate binding. An interaction with substrate tRNA region spans residues 35–38 (DSRQ).

Belongs to the IPP transferase family. As to quaternary structure, monomer. It depends on Mg(2+) as a cofactor.

It catalyses the reaction adenosine(37) in tRNA + dimethylallyl diphosphate = N(6)-dimethylallyladenosine(37) in tRNA + diphosphate. Its function is as follows. Catalyzes the transfer of a dimethylallyl group onto the adenine at position 37 in tRNAs that read codons beginning with uridine, leading to the formation of N6-(dimethylallyl)adenosine (i(6)A). The chain is tRNA dimethylallyltransferase 1 from Geotalea daltonii (strain DSM 22248 / JCM 15807 / FRC-32) (Geobacter daltonii).